The primary structure comprises 448 residues: Bifunctional protein GlmU (448 aa).

Residues Met1–Cys230 are pyrophosphorylase. UDP-N-acetyl-alpha-D-glucosamine-binding positions include Leu9 to Gly12, Lys23, Gln76, and Gly81 to Thr82. Position 106 (Asp106) interacts with Mg(2+). The UDP-N-acetyl-alpha-D-glucosamine site is built by Gly142, Glu156, Asn171, and Asn228. Asn228 serves as a coordination point for Mg(2+). The linker stretch occupies residues Phe231–Ser251. Positions Gly252–Lys448 are N-acetyltransferase. UDP-N-acetyl-alpha-D-glucosamine contacts are provided by Arg317 and Lys335. The active-site Proton acceptor is His347. Residues Tyr350 and Asn361 each coordinate UDP-N-acetyl-alpha-D-glucosamine. Acetyl-CoA-binding positions include Ala364, Asn370–Tyr371, Ser389, Ser407, and Arg424.

In the N-terminal section; belongs to the N-acetylglucosamine-1-phosphate uridyltransferase family. It in the C-terminal section; belongs to the transferase hexapeptide repeat family. In terms of assembly, homotrimer. It depends on Mg(2+) as a cofactor.

It is found in the cytoplasm. The enzyme catalyses alpha-D-glucosamine 1-phosphate + acetyl-CoA = N-acetyl-alpha-D-glucosamine 1-phosphate + CoA + H(+). It carries out the reaction N-acetyl-alpha-D-glucosamine 1-phosphate + UTP + H(+) = UDP-N-acetyl-alpha-D-glucosamine + diphosphate. It functions in the pathway nucleotide-sugar biosynthesis; UDP-N-acetyl-alpha-D-glucosamine biosynthesis; N-acetyl-alpha-D-glucosamine 1-phosphate from alpha-D-glucosamine 6-phosphate (route II): step 2/2. Its pathway is nucleotide-sugar biosynthesis; UDP-N-acetyl-alpha-D-glucosamine biosynthesis; UDP-N-acetyl-alpha-D-glucosamine from N-acetyl-alpha-D-glucosamine 1-phosphate: step 1/1. It participates in bacterial outer membrane biogenesis; LPS lipid A biosynthesis. Functionally, catalyzes the last two sequential reactions in the de novo biosynthetic pathway for UDP-N-acetylglucosamine (UDP-GlcNAc). The C-terminal domain catalyzes the transfer of acetyl group from acetyl coenzyme A to glucosamine-1-phosphate (GlcN-1-P) to produce N-acetylglucosamine-1-phosphate (GlcNAc-1-P), which is converted into UDP-GlcNAc by the transfer of uridine 5-monophosphate (from uridine 5-triphosphate), a reaction catalyzed by the N-terminal domain. This chain is Bifunctional protein GlmU, found in Bartonella quintana (strain Toulouse) (Rochalimaea quintana).